Consider the following 1140-residue polypeptide: uncharacterized protein (1140 aa).

Disordered stretches follow at residues 1 to 49 (MGSS…TSPE), 97 to 243 (SSDI…STIS), 280 to 427 (TSSS…KSSV), 512 to 541 (ASSTLGSKVSSSNSRMATSKTSSTSSDLSK), 702 to 747 (FSTP…STAS), 916 to 1059 (CPEK…PIGR), and 1080 to 1103 (LSSSTEKVNRSTTKPTAAIHGTSS). A compositionally biased stretch (polar residues) spans 105–129 (VNDVESSTSGPSNSYSALSSTNAQL). 3 stretches are compositionally biased toward low complexity: residues 130 to 154 (SSSTTETDSISSSAIQTSSPQTSSS), 172 to 214 (TTAS…TTSD), and 221 to 243 (SSSTSDVSSLLSSTSSPASSTIS). Positions 516 to 528 (LGSKVSSSNSRMA) are enriched in polar residues. Low complexity-rich tracts occupy residues 529 to 541 (TSKTSSTSSDLSK) and 703 to 718 (STPESSPTTSTLVTSE). Residues 719-733 (APSTVSSMTTSAPFI) are compositionally biased toward polar residues. A compositionally biased stretch (low complexity) spans 734–747 (NNSTSARPSPSTAS). A compositionally biased stretch (basic and acidic residues) spans 949 to 961 (SFKDMKTSQETKK). Over residues 977 to 997 (EKTSPTTKASPSTSPSESKAA) the composition is skewed to low complexity. Polar residues-rich tracts occupy residues 998 to 1023 (GNTSVATNASPSTSPSESQGTGSTSV), 1031 to 1055 (TKNSEGVSTTKAKNTSTVAKSSTES), and 1089 to 1103 (RSTTKPTAAIHGTSS).

This is an uncharacterized protein from Saccharomyces cerevisiae (strain ATCC 204508 / S288c) (Baker's yeast).